Reading from the N-terminus, the 141-residue chain is Hemoglobin subunit alpha-D (141 aa).

A Globin domain is found at 1–141 (MLTEDDKQLI…VSAVLAEKYR (141 aa)). Residues His-58 and His-87 each contribute to the heme b site.

Belongs to the globin family. Heterotetramer of two alpha-D chains and two beta chains. Red blood cells.

In terms of biological role, involved in oxygen transport from the lung to the various peripheral tissues. This Chelonoidis niger (Galapagos giant tortoise) protein is Hemoglobin subunit alpha-D (HBAD).